A 449-amino-acid polypeptide reads, in one-letter code: Phosphoglucosamine mutase (449 aa).

Ser100 (phosphoserine intermediate) is an active-site residue. Residues Ser100, Asp241, Asp243, and Asp245 each coordinate Mg(2+). Ser100 carries the phosphoserine modification.

It belongs to the phosphohexose mutase family. The cofactor is Mg(2+). Activated by phosphorylation.

It catalyses the reaction alpha-D-glucosamine 1-phosphate = D-glucosamine 6-phosphate. In terms of biological role, catalyzes the conversion of glucosamine-6-phosphate to glucosamine-1-phosphate. This is Phosphoglucosamine mutase from Clostridium botulinum (strain Langeland / NCTC 10281 / Type F).